Here is a 273-residue protein sequence, read N- to C-terminus: 3-methyl-2-oxobutanoate hydroxymethyltransferase (273 aa).

Positions 49 and 88 each coordinate Mg(2+). 3-methyl-2-oxobutanoate contacts are provided by residues 49-50 (DS), Asp-88, and Lys-118. Glu-120 lines the Mg(2+) pocket. Glu-187 serves as the catalytic Proton acceptor.

The protein belongs to the PanB family. Homodecamer; pentamer of dimers. It depends on Mg(2+) as a cofactor.

Its subcellular location is the cytoplasm. The enzyme catalyses 3-methyl-2-oxobutanoate + (6R)-5,10-methylene-5,6,7,8-tetrahydrofolate + H2O = 2-dehydropantoate + (6S)-5,6,7,8-tetrahydrofolate. It functions in the pathway cofactor biosynthesis; (R)-pantothenate biosynthesis; (R)-pantoate from 3-methyl-2-oxobutanoate: step 1/2. Its function is as follows. Catalyzes the reversible reaction in which hydroxymethyl group from 5,10-methylenetetrahydrofolate is transferred onto alpha-ketoisovalerate to form ketopantoate. In Sinorhizobium medicae (strain WSM419) (Ensifer medicae), this protein is 3-methyl-2-oxobutanoate hydroxymethyltransferase.